A 200-amino-acid chain; its full sequence is dTTP/UTP pyrophosphatase (200 aa).

The active-site Proton acceptor is the D81.

The protein belongs to the Maf family. YhdE subfamily. It depends on a divalent metal cation as a cofactor.

The protein resides in the cytoplasm. The enzyme catalyses dTTP + H2O = dTMP + diphosphate + H(+). The catalysed reaction is UTP + H2O = UMP + diphosphate + H(+). Its function is as follows. Nucleoside triphosphate pyrophosphatase that hydrolyzes dTTP and UTP. May have a dual role in cell division arrest and in preventing the incorporation of modified nucleotides into cellular nucleic acids. In Albidiferax ferrireducens (strain ATCC BAA-621 / DSM 15236 / T118) (Rhodoferax ferrireducens), this protein is dTTP/UTP pyrophosphatase.